A 702-amino-acid chain; its full sequence is Ribosomal RNA large subunit methyltransferase K/L (702 aa).

The THUMP domain maps to 43–154 (LVYQSLMWSR…KETASIALDL (112 aa)).

The protein belongs to the methyltransferase superfamily. RlmKL family.

It is found in the cytoplasm. The enzyme catalyses guanosine(2445) in 23S rRNA + S-adenosyl-L-methionine = N(2)-methylguanosine(2445) in 23S rRNA + S-adenosyl-L-homocysteine + H(+). The catalysed reaction is guanosine(2069) in 23S rRNA + S-adenosyl-L-methionine = N(2)-methylguanosine(2069) in 23S rRNA + S-adenosyl-L-homocysteine + H(+). Its function is as follows. Specifically methylates the guanine in position 2445 (m2G2445) and the guanine in position 2069 (m7G2069) of 23S rRNA. This is Ribosomal RNA large subunit methyltransferase K/L from Escherichia coli O139:H28 (strain E24377A / ETEC).